A 338-amino-acid chain; its full sequence is Phenylalanine--tRNA ligase alpha subunit (338 aa).

Glu-253 is a binding site for Mg(2+).

The protein belongs to the class-II aminoacyl-tRNA synthetase family. Phe-tRNA synthetase alpha subunit type 1 subfamily. Tetramer of two alpha and two beta subunits. Mg(2+) is required as a cofactor.

The protein localises to the cytoplasm. It catalyses the reaction tRNA(Phe) + L-phenylalanine + ATP = L-phenylalanyl-tRNA(Phe) + AMP + diphosphate + H(+). The polypeptide is Phenylalanine--tRNA ligase alpha subunit (Citrifermentans bemidjiense (strain ATCC BAA-1014 / DSM 16622 / JCM 12645 / Bem) (Geobacter bemidjiensis)).